A 225-amino-acid polypeptide reads, in one-letter code: Cobalt transport protein CbiM (225 aa).

The next 6 helical transmembrane spans lie at 7-27 (VLPL…VAIA), 43-63 (PFVG…VPVP), 76-96 (LAAV…ALLI), 108-128 (TLGA…YFAF), 143-163 (FLAG…ALAL), and 175-195 (FTGV…LEGV).

It belongs to the CbiM family. Forms an energy-coupling factor (ECF) transporter complex composed of an ATP-binding protein (A component, CbiO), a transmembrane protein (T component, CbiQ) and 2 possible substrate-capture proteins (S components, CbiM and CbiN) of unknown stoichimetry.

Its subcellular location is the cell inner membrane. It participates in cofactor biosynthesis; adenosylcobalamin biosynthesis. Part of the energy-coupling factor (ECF) transporter complex CbiMNOQ involved in cobalt import. This is Cobalt transport protein CbiM from Sorangium cellulosum (strain So ce56) (Polyangium cellulosum (strain So ce56)).